A 316-amino-acid chain; its full sequence is Methionyl-tRNA formyltransferase (316 aa).

Residue 108-111 (SLLP) coordinates (6S)-5,6,7,8-tetrahydrofolate.

It belongs to the Fmt family.

The catalysed reaction is L-methionyl-tRNA(fMet) + (6R)-10-formyltetrahydrofolate = N-formyl-L-methionyl-tRNA(fMet) + (6S)-5,6,7,8-tetrahydrofolate + H(+). Functionally, attaches a formyl group to the free amino group of methionyl-tRNA(fMet). The formyl group appears to play a dual role in the initiator identity of N-formylmethionyl-tRNA by promoting its recognition by IF2 and preventing the misappropriation of this tRNA by the elongation apparatus. In Heliobacterium modesticaldum (strain ATCC 51547 / Ice1), this protein is Methionyl-tRNA formyltransferase.